The chain runs to 332 residues: NADH-quinone oxidoreductase subunit H (332 aa).

Transmembrane regions (helical) follow at residues 11–31 (TYKILFLLVPVLVSVAMIVWL), 77–97 (VIFILAPIVTMTLALVSWAVI), 110–130 (VGVLYLFAVSSLGVYGIIMGG), 156–176 (IGVIIINVLLCVGSLNLNDII), 182–202 (LWFIIPLFPMFVIFFISALAE), 240–260 (NILLMCAMGSILFLGGWLSPI), 268–288 (IPGAIWMIFKILFLFVLFALV), and 307–327 (IFLPLSLTWVVLTASYLFYFN).

Belongs to the complex I subunit 1 family. NDH-1 is composed of 14 different subunits. Subunits NuoA, H, J, K, L, M, N constitute the membrane sector of the complex.

The protein localises to the cell inner membrane. It carries out the reaction a quinone + NADH + 5 H(+)(in) = a quinol + NAD(+) + 4 H(+)(out). NDH-1 shuttles electrons from NADH, via FMN and iron-sulfur (Fe-S) centers, to quinones in the respiratory chain. The immediate electron acceptor for the enzyme in this species is believed to be ubiquinone. Couples the redox reaction to proton translocation (for every two electrons transferred, four hydrogen ions are translocated across the cytoplasmic membrane), and thus conserves the redox energy in a proton gradient. This subunit may bind ubiquinone. This Pelagibacter ubique (strain HTCC1062) protein is NADH-quinone oxidoreductase subunit H.